A 135-amino-acid chain; its full sequence is Large ribosomal subunit protein uL16c (135 aa).

It belongs to the universal ribosomal protein uL16 family. In terms of assembly, part of the 50S ribosomal subunit.

It localises to the plastid. The protein resides in the chloroplast. The sequence is that of Large ribosomal subunit protein uL16c from Jasminum nudiflorum (Winter jasmine).